Consider the following 125-residue polypeptide: DNA-directed RNA polymerases I and III subunit RPAC2 (125 aa).

The protein belongs to the archaeal Rpo11/eukaryotic RPB11/RPC19 RNA polymerase subunit family. As to quaternary structure, component of the RNA polymerase I (Pol I) and RNA polymerase III (Pol III) complexes consisting of 14 and 17 subunits, respectively.

The protein localises to the nucleus. Functionally, DNA-dependent RNA polymerase catalyzes the transcription of DNA into RNA using the four ribonucleoside triphosphates as substrates. Common core component of RNA polymerases I and III which synthesize ribosomal RNA precursors and small RNAs, such as 5S rRNA and tRNAs, respectively. This Schizosaccharomyces pombe (strain 972 / ATCC 24843) (Fission yeast) protein is DNA-directed RNA polymerases I and III subunit RPAC2 (rpc19).